The chain runs to 91 residues: Small ribosomal subunit protein uS19 (91 aa).

It belongs to the universal ribosomal protein uS19 family.

Functionally, protein S19 forms a complex with S13 that binds strongly to the 16S ribosomal RNA. This chain is Small ribosomal subunit protein uS19, found in Delftia acidovorans (strain DSM 14801 / SPH-1).